Reading from the N-terminus, the 493-residue chain is 3-octaprenyl-4-hydroxybenzoate carboxy-lyase (493 aa).

Asparagine 177 contacts Mn(2+). Prenylated FMN is bound by residues 180-182 (IYR), 194-196 (RWL), and 199-200 (RG). Glutamate 243 is a binding site for Mn(2+). The active-site Proton donor is aspartate 292.

Belongs to the UbiD family. In terms of assembly, homohexamer. Prenylated FMN is required as a cofactor. Requires Mn(2+) as cofactor.

It localises to the cell membrane. The enzyme catalyses a 4-hydroxy-3-(all-trans-polyprenyl)benzoate + H(+) = a 2-(all-trans-polyprenyl)phenol + CO2. It participates in cofactor biosynthesis; ubiquinone biosynthesis. In terms of biological role, catalyzes the decarboxylation of 3-octaprenyl-4-hydroxy benzoate to 2-octaprenylphenol, an intermediate step in ubiquinone biosynthesis. The polypeptide is 3-octaprenyl-4-hydroxybenzoate carboxy-lyase (Colwellia psychrerythraea (strain 34H / ATCC BAA-681) (Vibrio psychroerythus)).